Consider the following 134-residue polypeptide: Large-conductance mechanosensitive channel (134 aa).

2 consecutive transmembrane segments (helical) span residues 15–35 (IDLA…QSVV) and 80–100 (GNFI…FLAV).

Belongs to the MscL family. In terms of assembly, homopentamer.

It localises to the cell inner membrane. Channel that opens in response to stretch forces in the membrane lipid bilayer. May participate in the regulation of osmotic pressure changes within the cell. The sequence is that of Large-conductance mechanosensitive channel from Methylocella silvestris (strain DSM 15510 / CIP 108128 / LMG 27833 / NCIMB 13906 / BL2).